The primary structure comprises 126 residues: Protein translocase subunit SecE (126 aa).

The next 3 helical transmembrane spans lie at 20–40 (WLAA…YGEM), 42–62 (VVVR…VAAT), and 97–117 (IVLA…GIMV).

It belongs to the SecE/SEC61-gamma family. In terms of assembly, component of the Sec protein translocase complex. Heterotrimer consisting of SecY, SecE and SecG subunits. The heterotrimers can form oligomers, although 1 heterotrimer is thought to be able to translocate proteins. Interacts with the ribosome. Interacts with SecDF, and other proteins may be involved. Interacts with SecA.

The protein localises to the cell inner membrane. Its function is as follows. Essential subunit of the Sec protein translocation channel SecYEG. Clamps together the 2 halves of SecY. May contact the channel plug during translocation. This is Protein translocase subunit SecE from Vibrio alginolyticus.